Consider the following 168-residue polypeptide: Nicotinamide-nucleotide adenylyltransferase (168 aa).

This sequence belongs to the archaeal NMN adenylyltransferase family.

It is found in the cytoplasm. The catalysed reaction is beta-nicotinamide D-ribonucleotide + ATP + H(+) = diphosphate + NAD(+). The protein operates within cofactor biosynthesis; NAD(+) biosynthesis; NAD(+) from nicotinamide D-ribonucleotide: step 1/1. The polypeptide is Nicotinamide-nucleotide adenylyltransferase (Methanoculleus marisnigri (strain ATCC 35101 / DSM 1498 / JR1)).